Reading from the N-terminus, the 103-residue chain is Carboxysome shell protein CcmK2 (103 aa).

Residues 4-90 (AVGMIETRGF…PHENLEYVLP (87 aa)) enclose the BMC domain.

It belongs to the bacterial microcompartments protein family. CcmK subfamily. Homohexamer, might also make dodecamers. Interacts with full-length CcmM. Forms mixed heterohexamers of all possible stoichiometries with CcmK1, which might form dodecamers. Only very weak interactions with CcmK3 and CcmK4 were seen.

The protein resides in the carboxysome. Functionally, one of the shell proteins of the carboxysome, a polyhedral inclusion where RuBisCO (ribulose bisphosphate carboxylase, rbcL-rbcS) is sequestered. The central pore probably regulates metabolite flux. Hexamers make sheets that form the facets of the polyhedral carboxysome. The sequence is that of Carboxysome shell protein CcmK2 from Synechocystis sp. (strain ATCC 27184 / PCC 6803 / Kazusa).